A 231-amino-acid polypeptide reads, in one-letter code: Large ribosomal subunit protein uL1 (231 aa).

Belongs to the universal ribosomal protein uL1 family. As to quaternary structure, part of the 50S ribosomal subunit.

Its function is as follows. Binds directly to 23S rRNA. The L1 stalk is quite mobile in the ribosome, and is involved in E site tRNA release. Functionally, protein L1 is also a translational repressor protein, it controls the translation of the L11 operon by binding to its mRNA. The chain is Large ribosomal subunit protein uL1 from Nitrosomonas eutropha (strain DSM 101675 / C91 / Nm57).